The following is a 253-amino-acid chain: Triosephosphate isomerase, cytosolic (253 aa).

Positions 10 and 12 each coordinate substrate. The active-site Electrophile is the H96. E166 acts as the Proton acceptor in catalysis.

Belongs to the triosephosphate isomerase family. Homodimer.

Its subcellular location is the cytoplasm. The catalysed reaction is D-glyceraldehyde 3-phosphate = dihydroxyacetone phosphate. It functions in the pathway carbohydrate biosynthesis; gluconeogenesis. It participates in carbohydrate degradation; glycolysis; D-glyceraldehyde 3-phosphate from glycerone phosphate: step 1/1. The chain is Triosephosphate isomerase, cytosolic from Zea mays (Maize).